Reading from the N-terminus, the 72-residue chain is Disintegrin basilicin (72 aa).

One can recognise a Disintegrin domain in the interval 1 to 72 (AGEECDCGSP…ADCPRNHFHA (72 aa)). 6 disulfides stabilise this stretch: Cys5–Cys20, Cys7–Cys15, Cys14–Cys37, Cys28–Cys34, Cys33–Cys58, and Cys46–Cys65. The Cell attachment site motif lies at 50-52 (RGD).

The protein belongs to the venom metalloproteinase (M12B) family. P-II subfamily. P-IIa sub-subfamily. In terms of assembly, monomer (disintegrin). Expressed by the venom gland.

The protein localises to the secreted. Its function is as follows. Inhibits fibrinogen interaction with platelets. Acts by binding to alpha-IIb/beta-3 (ITGA2B/ITGB3) on the platelet surface and inhibits aggregation induced by ADP, thrombin, platelet-activating factor and collagen. This Crotalus basiliscus (Mexican west-coast rattlesnake) protein is Disintegrin basilicin.